A 131-amino-acid polypeptide reads, in one-letter code: Small ribosomal subunit protein uS8 (131 aa).

It belongs to the universal ribosomal protein uS8 family. In terms of assembly, part of the 30S ribosomal subunit. Contacts proteins S5 and S12.

Functionally, one of the primary rRNA binding proteins, it binds directly to 16S rRNA central domain where it helps coordinate assembly of the platform of the 30S subunit. This is Small ribosomal subunit protein uS8 from Geobacillus stearothermophilus (Bacillus stearothermophilus).